A 100-amino-acid chain; its full sequence is CCAAT/enhancer-binding protein homolog 2 (100 aa).

Disordered regions lie at residues 1–60 and 79–100; these read MSGN…ETLE and AYAK…SSAV. Residues 17–80 enclose the bZIP domain; that stretch reads EDDYSTKRKR…SFLKEMFMAY (64 aa). A basic motif region spans residues 23–48; it reads KRKRNNEAVNRTRQKKRQEENDTAEK. Residues 24–83 adopt a coiled-coil conformation; sequence RKRNNEAVNRTRQKKRQEENDTAEKVDELKKENETLERKVEQLQKELSFLKEMFMAYAKN. Positions 39 to 60 are enriched in basic and acidic residues; sequence RQEENDTAEKVDELKKENETLE. A leucine-zipper region spans residues 52–73; that stretch reads LKKENETLERKVEQLQKELSFL. A compositionally biased stretch (pro residues) spans 88–100; the sequence is GPPPPPPPSSSAV.

Belongs to the bZIP family. C/EBP subfamily. As to quaternary structure, interacts with transcription factor zip-11. Expressed broadly in somatic tissues including the intestine.

The protein localises to the nucleus. In terms of biological role, transcription factor that binds to the promoter and the enhancer regions of target genes. Regulates expression of genes involved in fat metabolism, including ech-1.1 and fat-5. Has a protective role in response to infection by the Gram-negative bacterium P.aeruginosa. Required for the activation of infection response gene irg-1 following P.aeruginosa infection. Required to prevent P.aeruginosa ToxA-mediated lethality. May also function in concert with transcription factor zip-11 to mediate immune responses, independently of the pmk-1/p38 MAPK pathway. May act together with the bZIP transcription factor, zip-2. This is CCAAT/enhancer-binding protein homolog 2 from Caenorhabditis elegans.